Here is a 274-residue protein sequence, read N- to C-terminus: Diaminopimelate epimerase (274 aa).

Asn11 and Asn62 together coordinate substrate. Catalysis depends on Cys71, which acts as the Proton donor. Substrate-binding positions include 72-73 (GN), Asn157, Asn190, and 208-209 (ER). Catalysis depends on Cys217, which acts as the Proton acceptor. Residue 218–219 (GT) coordinates substrate.

Belongs to the diaminopimelate epimerase family. As to quaternary structure, homodimer.

The protein localises to the cytoplasm. The enzyme catalyses (2S,6S)-2,6-diaminopimelate = meso-2,6-diaminopimelate. Its pathway is amino-acid biosynthesis; L-lysine biosynthesis via DAP pathway; DL-2,6-diaminopimelate from LL-2,6-diaminopimelate: step 1/1. Its function is as follows. Catalyzes the stereoinversion of LL-2,6-diaminopimelate (L,L-DAP) to meso-diaminopimelate (meso-DAP), a precursor of L-lysine and an essential component of the bacterial peptidoglycan. The chain is Diaminopimelate epimerase from Elusimicrobium minutum (strain Pei191).